The following is a 554-amino-acid chain: Glutamine--tRNA ligase (554 aa).

The short motif at 33-43 is the 'HIGH' region element; sequence PEPNGYLHIGH. Residues 34-36 and 40-46 each bind ATP; these read EPN and HIGHAKS. Residues D66 and Y210 each coordinate L-glutamine. Residues T229, 259–260, and 267–269 each bind ATP; these read RL and MSK. The 'KMSKS' region motif lies at 266–270; the sequence is VMSKR.

Belongs to the class-I aminoacyl-tRNA synthetase family. Monomer.

It is found in the cytoplasm. It catalyses the reaction tRNA(Gln) + L-glutamine + ATP = L-glutaminyl-tRNA(Gln) + AMP + diphosphate. In Clostridioides difficile (strain 630) (Peptoclostridium difficile), this protein is Glutamine--tRNA ligase.